The sequence spans 221 residues: CASP-like protein 2U10 (221 aa).

Residues 1–22 (MDSSSKPMNGSAGGSPVGDERK) are disordered. At 1–31 (MDSSSKPMNGSAGGSPVGDERKMGDHEHEFR) the chain is on the cytoplasmic side. A helical membrane pass occupies residues 32-52 (ISIILLRSFLLVLVIISEALM). Residues 53–91 (VTDRETGSVPLPFFGLPRPVFVTKTAKYELVTGLKFYVD) are Extracellular-facing. Residues 92–112 (ALGVVIGYTVLHLLFNIGLVA) form a helical membrane-spanning segment. At 113 to 122 (TKGTVVDCKS) the chain is on the cytoplasmic side. Residues 123 to 143 (VAWISFIADSMMGYLLLSSAA) form a helical membrane-spanning segment. At 144 to 174 (VATEIGYLAEEGAPAVLWRKVCNAFGYFCTV) the chain is on the extracellular side. The chain crosses the membrane as a helical span at residues 175–195 (YAISVVICFIAALVSFVVVGI). Residues 196–221 (SAYHLFRLYGIQQQAAREKEKLSAEM) are Cytoplasmic-facing.

It belongs to the Casparian strip membrane proteins (CASP) family. As to quaternary structure, homodimer and heterodimers.

Its subcellular location is the cell membrane. In Selaginella moellendorffii (Spikemoss), this protein is CASP-like protein 2U10.